Reading from the N-terminus, the 294-residue chain is ATP synthase gamma chain (294 aa).

The protein belongs to the ATPase gamma chain family. F-type ATPases have 2 components, CF(1) - the catalytic core - and CF(0) - the membrane proton channel. CF(1) has five subunits: alpha(3), beta(3), gamma(1), delta(1), epsilon(1). CF(0) has three main subunits: a, b and c.

The protein localises to the cell inner membrane. Functionally, produces ATP from ADP in the presence of a proton gradient across the membrane. The gamma chain is believed to be important in regulating ATPase activity and the flow of protons through the CF(0) complex. This Nitratiruptor sp. (strain SB155-2) protein is ATP synthase gamma chain.